The primary structure comprises 441 residues: Deoxyguanosinetriphosphate triphosphohydrolase-like protein (441 aa).

The region spanning 62-255 (RLTHSLEAAQ…MELADDIAYG (194 aa)) is the HD domain.

The protein belongs to the dGTPase family. Type 2 subfamily.

The chain is Deoxyguanosinetriphosphate triphosphohydrolase-like protein (dgt) from Vibrio cholerae serotype O1 (strain ATCC 39541 / Classical Ogawa 395 / O395).